The primary structure comprises 83 residues: Retinal cone rhodopsin-sensitive cGMP 3',5'-cyclic phosphodiesterase subunit gamma (83 aa).

Positions 1 to 17 are enriched in polar residues; that stretch reads MSDNTVLAPPTSNQGPT. The interval 1 to 51 is disordered; it reads MSDNTVLAPPTSNQGPTTPRKGPPKFKQRQTRQFKSKPPKKGVKGFGDDIP. Positions 22–43 are enriched in basic residues; it reads GPPKFKQRQTRQFKSKPPKKGV.

This sequence belongs to the rod/cone cGMP-PDE gamma subunit family. In terms of assembly, tetramer composed of two catalytic chains (alpha and beta), and two inhibitory chains (gamma).

The catalysed reaction is 3',5'-cyclic GMP + H2O = GMP + H(+). Functionally, participates in processes of transmission and amplification of the visual signal. cGMP-PDEs are the effector molecules in G-protein-mediated phototransduction in vertebrate rods and cones. The sequence is that of Retinal cone rhodopsin-sensitive cGMP 3',5'-cyclic phosphodiesterase subunit gamma (PDE6H) from Bos taurus (Bovine).